The sequence spans 234 residues: Large ribosomal subunit protein uL1 (234 aa).

This sequence belongs to the universal ribosomal protein uL1 family. In terms of assembly, part of the 50S ribosomal subunit.

In terms of biological role, binds directly to 23S rRNA. The L1 stalk is quite mobile in the ribosome, and is involved in E site tRNA release. Its function is as follows. Protein L1 is also a translational repressor protein, it controls the translation of the L11 operon by binding to its mRNA. The chain is Large ribosomal subunit protein uL1 from Sodalis glossinidius (strain morsitans).